The chain runs to 160 residues: MNLKILGIDPGSRNCGYAIMEANKGKNILIEAGLIKIKPSTLQYQITELCEGLDLIFKNHSFDEVAIEDIFFAYNPKTVLKLAQFRGALSLKILQIHGDFAEYTPLQVKKAVTGKAKATKEQVAFMVKRLLGLSKDIKPLDITDAIAVALTHAANLRVRV.

Catalysis depends on residues aspartate 9, glutamate 68, and aspartate 141. The Mg(2+) site is built by aspartate 9, glutamate 68, and aspartate 141.

Belongs to the RuvC family. Homodimer which binds Holliday junction (HJ) DNA. The HJ becomes 2-fold symmetrical on binding to RuvC with unstacked arms; it has a different conformation from HJ DNA in complex with RuvA. In the full resolvosome a probable DNA-RuvA(4)-RuvB(12)-RuvC(2) complex forms which resolves the HJ. The cofactor is Mg(2+).

The protein localises to the cytoplasm. The catalysed reaction is Endonucleolytic cleavage at a junction such as a reciprocal single-stranded crossover between two homologous DNA duplexes (Holliday junction).. The RuvA-RuvB-RuvC complex processes Holliday junction (HJ) DNA during genetic recombination and DNA repair. Endonuclease that resolves HJ intermediates. Cleaves cruciform DNA by making single-stranded nicks across the HJ at symmetrical positions within the homologous arms, yielding a 5'-phosphate and a 3'-hydroxyl group; requires a central core of homology in the junction. The consensus cleavage sequence is 5'-(A/T)TT(C/G)-3'. Cleavage occurs on the 3'-side of the TT dinucleotide at the point of strand exchange. HJ branch migration catalyzed by RuvA-RuvB allows RuvC to scan DNA until it finds its consensus sequence, where it cleaves and resolves the cruciform DNA. This Campylobacter jejuni subsp. jejuni serotype O:23/36 (strain 81-176) protein is Crossover junction endodeoxyribonuclease RuvC.